Consider the following 132-residue polypeptide: Interleukin-5 (132 aa).

Positions 1-19 are cleaved as a signal peptide; the sequence is MRMLLCLNVLTLSCVWAIA. N-linked (GlcNAc...) asparagine glycans are attached at residues N45, N74, and N88.

The protein belongs to the IL-5 family. Homodimer; disulfide-linked. Interacts with IL5RA. Interacts with CSF2RB.

It localises to the secreted. Homodimeric cytokine expressed predominantly by T-lymphocytes and NK cells that plays an important role in the survival, differentiation, and chemotaxis of eosinophils. Acts also on activated and resting B-cells to induce immunoglobulin production, growth, and differentiation. Mechanistically, exerts its biological effects through a receptor composed of IL5RA subunit and the cytokine receptor common subunit beta/CSF2RB. Binding to the receptor leads to activation of various kinases including LYN, SYK and JAK2 and thereby propagates signals through the RAS-MAPK and JAK-STAT5 pathways respectively. The sequence is that of Interleukin-5 (Il5) from Rattus norvegicus (Rat).